We begin with the raw amino-acid sequence, 229 residues long: Protein rep (229 aa).

DNA is bound at residue Tyr-214.

It belongs to the Gram-positive plasmids replication protein type 1 family.

Functionally, produces a single-strand nick in a specific site of the plasmid, and this nick results in single-strand replication by rolling circle mechanism. The protein is Protein rep of Staphylococcus aureus.